A 262-amino-acid polypeptide reads, in one-letter code: Methanethiol S-methyltransferase (262 aa).

Helical transmembrane passes span 22–42 (LYSL…IGFV), 55–75 (PGAS…LFAV), 100–120 (ATYV…WQPI), 134–154 (AVLT…TFLI), and 195–215 (GFLM…VFAL).

This sequence belongs to the nurim family.

It localises to the membrane. It carries out the reaction methanethiol + S-adenosyl-L-methionine = dimethyl sulfide + S-adenosyl-L-homocysteine + H(+). Functionally, catalyzes the methylation of methanethiol (MeSH) to yield dimethylsulphide (DMS). This Pseudomonas deceptionensis protein is Methanethiol S-methyltransferase.